Reading from the N-terminus, the 149-residue chain is Transcriptional repressor NrdR (149 aa).

Residues 3–34 (CPYCSYEESKVVDSRSAEDYNAIRRRRECLRC) fold into a zinc finger. Positions 49 to 139 (ILVIKKDLSR…VYRQFKDINT (91 aa)) constitute an ATP-cone domain.

It belongs to the NrdR family. Requires Zn(2+) as cofactor.

Functionally, negatively regulates transcription of bacterial ribonucleotide reductase nrd genes and operons by binding to NrdR-boxes. This is Transcriptional repressor NrdR from Clostridium perfringens (strain SM101 / Type A).